The following is a 71-amino-acid chain: Exodeoxyribonuclease 7 small subunit (71 aa).

The protein belongs to the XseB family. In terms of assembly, heterooligomer composed of large and small subunits.

Its subcellular location is the cytoplasm. The catalysed reaction is Exonucleolytic cleavage in either 5'- to 3'- or 3'- to 5'-direction to yield nucleoside 5'-phosphates.. In terms of biological role, bidirectionally degrades single-stranded DNA into large acid-insoluble oligonucleotides, which are then degraded further into small acid-soluble oligonucleotides. In Clostridium botulinum (strain Loch Maree / Type A3), this protein is Exodeoxyribonuclease 7 small subunit.